A 141-amino-acid polypeptide reads, in one-letter code: MLSASDKANVKAIWSKVCVHAEEYGAETLERMFTVYPSTKTYFPHFDLTHGSAQVKAHGKKVVNAMGEAVNHLDDMAGALLKLSDLHAQKLRVDPVNFKLLAQCFLVVLGVHHPAALTPEVHASLDKFLCAVGLVLTAKYR.

Positions methionine 1–arginine 141 constitute a Globin domain. O2 is bound at residue histidine 58. Histidine 87 contacts heme b.

This sequence belongs to the globin family. There are three forms of hemoglobin in Sphenodon: A, A' and D. Hb A is a tetramer of two alpha-A and two beta-1, Hb A' is a tetramer of two alpha-a and two beta-2, Hb D is a tetramer of two alpha-D and two beta-2. As to expression, red blood cells.

In terms of biological role, involved in oxygen transport from the lung to the various peripheral tissues. This is Hemoglobin subunit alpha-A (HBAA) from Sphenodon punctatus (Tuatara).